A 244-amino-acid polypeptide reads, in one-letter code: Acetoacetate decarboxylase (244 aa).

The active-site Schiff-base intermediate with acetoacetate is Lys115.

The protein belongs to the ADC family.

The enzyme catalyses acetoacetate + H(+) = acetone + CO2. Catalyzes the conversion of acetoacetate to acetone and carbon dioxide. The polypeptide is Acetoacetate decarboxylase (Streptomyces nogalater).